Here is a 166-residue protein sequence, read N- to C-terminus: Lipoprotein signal peptidase (166 aa).

The next 4 helical transmembrane spans lie at 10-30 (GGALAPWLGISLIVILFDQLT), 32-52 (IAVLKTFAYGAMHALTPFFNL), 71-91 (WQRWAFTALGIGATLVICYLL), and 100-120 (FSLSLALILGGALGNVIDRLI). Residues Asp126 and Asp144 contribute to the active site. Residues 135 to 155 (WHWPAFNLADSAITVGAVLLI) form a helical membrane-spanning segment.

This sequence belongs to the peptidase A8 family.

It is found in the cell inner membrane. The catalysed reaction is Release of signal peptides from bacterial membrane prolipoproteins. Hydrolyzes -Xaa-Yaa-Zaa-|-(S,diacylglyceryl)Cys-, in which Xaa is hydrophobic (preferably Leu), and Yaa (Ala or Ser) and Zaa (Gly or Ala) have small, neutral side chains.. It functions in the pathway protein modification; lipoprotein biosynthesis (signal peptide cleavage). In terms of biological role, this protein specifically catalyzes the removal of signal peptides from prolipoproteins. The polypeptide is Lipoprotein signal peptidase (Burkholderia mallei (strain ATCC 23344)).